The following is a 1039-amino-acid chain: Serine/threonine-protein kinase Tao (1039 aa).

Residues 27–280 (FEDLREIGHG…SAKLLTHAYV (254 aa)) form the Protein kinase domain. Residues 33 to 41 (IGHGSFGAV) and lysine 56 contribute to the ATP site. The active-site Proton acceptor is aspartate 150. 4 disordered regions span residues 324-457 (SAVG…NSAS), 485-508 (GGGG…LADR), 629-648 (HQQD…KKLH), and 677-707 (WKRE…KQHE). Residues 341–350 (SSKSNSITSE) are compositionally biased toward polar residues. The segment covering 359 to 376 (SAASSQSSSSNSIPAAAQ) has biased composition (low complexity). Basic residues predominate over residues 377–387 (NHHHIAAHHHQ). Low complexity-rich tracts occupy residues 388 to 397 (QAASAAVAAA) and 413 to 429 (PSGQ…VSRN). Polar residues predominate over residues 444-454 (HSMNNNVTPTN). Gly residues predominate over residues 485 to 500 (GGGGTGTGGSGGGSPA). Coiled-coil stretches lie at residues 631–765 (QDVE…MLLK) and 835–993 (KQFR…DNES). Residues 677-693 (WKRELSMDESTPKRQRD) are compositionally biased toward basic and acidic residues.

It belongs to the protein kinase superfamily. STE Ser/Thr protein kinase family. STE20 subfamily. In terms of assembly, interacts with Schip1; the interaction enhances Tao kinase activity. The cofactor is Mg(2+). In terms of processing, autophosphorylated. In the posterior midgut, expressed in almost all intestinal cell types including intestinal stem cells and enterocytes (at protein level). Maternally expressed, ubiquitously distributed in the egg and early embryo and enriched in the germ plasm at the posterior pole of the early embryo including the pole cells.

It localises to the cytoplasm. It is found in the cytoskeleton. Its subcellular location is the spindle. The protein localises to the membrane. The protein resides in the perikaryon. It localises to the cell cortex. It is found in the cell projection. Its subcellular location is the axon. It catalyses the reaction L-seryl-[protein] + ATP = O-phospho-L-seryl-[protein] + ADP + H(+). The catalysed reaction is L-threonyl-[protein] + ATP = O-phospho-L-threonyl-[protein] + ADP + H(+). In terms of biological role, serine/threonine-protein kinase which regulates the Hippo/SWH (Sav/Wts/Hpo) signaling pathway, a signaling pathway that plays a pivotal role in organ size control and tumor suppression by restricting proliferation and promoting apoptosis. The core of this pathway is composed of a kinase cascade wherein Hippo (hpo), in complex with its regulatory protein Salvador (sav), phosphorylates and activates Warts (wts) in complex with its regulatory protein Mats, which in turn phosphorylates and inactivates the Yorkie (yki) oncoprotein. In imaginal cells, phosphorylates and activates hpo and leads to repression of yki. In the midgut, negatively regulates the proliferation of intestinal stem cells through the Hippo/SWH pathway. Independent of the hippo/SWH pathway, regulates epithelial morphogenesis in follicle cells by promoting the endocytosis of Fas2 and reducing lateral adhesion between epithelial cells which, in turn, permits shrinking of the lateral membrane and initiates morphogenesis of the squamous epithelium. Required for the development of both the mushroom body and the ellipsoid body in the brain and may act as a negative regulator of the par-1 kinase. Negatively regulates the JNK pathway which increases sensitivity to ethanol exposure. Plays a role in the control of cell shape by negatively regulating the growth of microtubule plus-ends as they contact the actin-rich cell cortex. Required for the induction of apoptosis in pole cells by promoting expression of skl which enhances activity of the apoptosis activator hid. Induces in vitro expression of large, highly dynamic, microtubule-dependent lamellopodia-like cytoplasmic expansions which constantly probe the environment. Functionally, induces in vitro expression of actin-dependent filopodia-like cytoplasmic protrusions which firmly attach to the substrate. Antagonizes the activity of isoform D. In Drosophila melanogaster (Fruit fly), this protein is Serine/threonine-protein kinase Tao.